Here is a 187-residue protein sequence, read N- to C-terminus: MNYFDNKIDQFATYLQKRNNLDHIQFLQVRLGMQIIVGNFFKILVTYSISIFLSVFLFTLVTHLSYMLIRYNAHGAHAKSSILCYIQSILTFVFVPYFLINIDINFTYLLALSIIGLISVVIYAPAATKKQPIPIKLVKRKKYLSIIMYLLVLILSLIIHPFYAQFMLLGILVESITLLPIFFPKED.

The next 5 membrane-spanning stretches (helical) occupy residues 49–69, 82–102, 106–126, 144–164, and 166–186; these read ISIF…YMLI, ILCY…LINI, FTYL…YAPA, LSII…PFYA, and FMLL…FPKE.

The protein belongs to the AgrB family.

It localises to the cell membrane. Its function is as follows. Essential for the production of a quorum sensing system signal molecule, the autoinducing peptide (AIP). This quorum sensing system is responsible for the regulation of the expression of virulence factor genes. Involved in the proteolytic processing of AgrD, the precursor of AIP. The polypeptide is Accessory gene regulator protein B (Staphylococcus aureus (strain Mu50 / ATCC 700699)).